A 528-amino-acid polypeptide reads, in one-letter code: Nucleoporin ASM4 (528 aa).

Residues 2 to 3 (FG) form an FG 1 repeat. The segment covering 23 to 50 (TTQMFQSQSQLQPQPQPQPQQQQQHLQF) has biased composition (low complexity). 2 disordered regions span residues 23–64 (TTQM…FGNS) and 88–144 (IKNG…SMNA). Composition is skewed to polar residues over residues 51–64 (NGSS…FGNS) and 97–108 (QHGQGNNPSWVN). Residues 61 to 62 (FG) form an FG 2 repeat. Positions 110–125 (PKKRFTPHTVIRRKTT) are enriched in basic residues. The span at 127–141 (QNSSSDINQNDDSSS) shows a compositional bias: low complexity. FG repeat units lie at residues 195–196 (FG), 274–275 (FG), and 291–292 (FG). Residues 265 to 394 (SSSLSAIIVF…IPYSKNAVEQ (130 aa)) enclose the RRM Nup35-type domain. Serine 458 and serine 464 each carry phosphoserine. A coiled-coil region spans residues 490-510 (NLLRNLESKMRQQEAKYRNNE). The FG 6 repeat unit spans residues 523 to 524 (FG).

In terms of assembly, component of the nuclear pore complex (NPC). NPC constitutes the exclusive means of nucleocytoplasmic transport. NPCs allow the passive diffusion of ions and small molecules and the active, nuclear transport receptor-mediated bidirectional transport of macromolecules such as proteins, RNAs, ribonucleoparticles (RNPs), and ribosomal subunits across the nuclear envelope. Due to its 8-fold rotational symmetry, all subunits are present with 8 copies or multiples thereof. ASM4 may form a subcomplex with NUP53, NDC1, and NUP170. Post-translationally, phosphorylated by CDC28.

The protein resides in the nucleus. It localises to the nuclear pore complex. The protein localises to the nucleus membrane. Functions as a component of the nuclear pore complex (NPC). NPC components, collectively referred to as nucleoporins (NUPs), can play the role of both NPC structural components and of docking or interaction partners for transiently associated nuclear transport factors. Active directional transport is assured by both, a Phe-Gly (FG) repeat affinity gradient for these transport factors across the NPC and a transport cofactor concentration gradient across the nuclear envelope (GSP1 and GSP2 GTPases associated predominantly with GTP in the nucleus, with GDP in the cytoplasm). May have a mitosis control function. This chain is Nucleoporin ASM4 (ASM4), found in Saccharomyces cerevisiae (strain ATCC 204508 / S288c) (Baker's yeast).